The sequence spans 301 residues: Inosose dehydratase (301 aa).

This sequence belongs to the IolE/MocC family. The cofactor is glutathione. Requires Co(2+) as cofactor. Mn(2+) is required as a cofactor.

The catalysed reaction is scyllo-inosose = 3D-3,5/4-trihydroxycyclohexane-1,2-dione + H2O. It functions in the pathway polyol metabolism; myo-inositol degradation into acetyl-CoA; acetyl-CoA from myo-inositol: step 2/7. Catalyzes the dehydration of inosose (2-keto-myo-inositol, 2KMI or 2,4,6/3,5-pentahydroxycyclohexanone) to 3D-(3,5/4)-trihydroxycyclohexane-1,2-dione (D-2,3-diketo-4-deoxy-epi-inositol). This Lacticaseibacillus casei (strain BL23) (Lactobacillus casei) protein is Inosose dehydratase.